Consider the following 114-residue polypeptide: Probable 4-amino-4-deoxy-L-arabinose-phosphoundecaprenol flippase subunit ArnE (114 aa).

Transmembrane regions (helical) follow at residues 41-61 (PWLI…IYLL), 64-84 (LPLS…LIGS), and 94-114 (YHNW…GGLL). Positions 53 to 112 (GMLLWIYLLQRLPLSMAYPMLSINLVLVLIGSRLFFHEQISYHNWLGAGAIIIGALLLGG) constitute an EamA domain.

The protein belongs to the ArnE family. Heterodimer of ArnE and ArnF.

The protein localises to the cell inner membrane. The protein operates within bacterial outer membrane biogenesis; lipopolysaccharide biosynthesis. Its function is as follows. Translocates 4-amino-4-deoxy-L-arabinose-phosphoundecaprenol (alpha-L-Ara4N-phosphoundecaprenol) from the cytoplasmic to the periplasmic side of the inner membrane. The sequence is that of Probable 4-amino-4-deoxy-L-arabinose-phosphoundecaprenol flippase subunit ArnE from Aeromonas salmonicida (strain A449).